A 463-amino-acid polypeptide reads, in one-letter code: Glutamate--tRNA ligase 1 (463 aa).

The short motif at 10–20 is the 'HIGH' region element; that stretch reads PSPTGYLHIGG. Positions 238-242 match the 'KMSKS' region motif; sequence KLSKR. Position 241 (Lys241) interacts with ATP.

The protein belongs to the class-I aminoacyl-tRNA synthetase family. Glutamate--tRNA ligase type 1 subfamily. Monomer.

Its subcellular location is the cytoplasm. The catalysed reaction is tRNA(Glu) + L-glutamate + ATP = L-glutamyl-tRNA(Glu) + AMP + diphosphate. Functionally, catalyzes the attachment of glutamate to tRNA(Glu) in a two-step reaction: glutamate is first activated by ATP to form Glu-AMP and then transferred to the acceptor end of tRNA(Glu). The sequence is that of Glutamate--tRNA ligase 1 from Helicobacter pylori (strain Shi470).